We begin with the raw amino-acid sequence, 98 residues long: MSLVHINILMAFTMSLTGLLMYRSHLMSALLCLEGMVLSLFILATLTILNSHFTLANMMPIILLVFAACEAAIGLALLIMISNTYGTDYVQNLNLLQC.

3 consecutive transmembrane segments (helical) span residues Met1–Met21, Ala29–Leu49, and Ile61–Ile81.

It belongs to the complex I subunit 4L family. In terms of assembly, core subunit of respiratory chain NADH dehydrogenase (Complex I) which is composed of 45 different subunits.

The protein resides in the mitochondrion inner membrane. The enzyme catalyses a ubiquinone + NADH + 5 H(+)(in) = a ubiquinol + NAD(+) + 4 H(+)(out). Functionally, core subunit of the mitochondrial membrane respiratory chain NADH dehydrogenase (Complex I) which catalyzes electron transfer from NADH through the respiratory chain, using ubiquinone as an electron acceptor. Part of the enzyme membrane arm which is embedded in the lipid bilayer and involved in proton translocation. This chain is NADH-ubiquinone oxidoreductase chain 4L (MT-ND4L), found in Monodon monoceros (Narwhal).